We begin with the raw amino-acid sequence, 447 residues long: T-DNA border endonuclease VirD2 (447 aa).

Disordered regions lie at residues 214 to 265 and 300 to 447; these read ADLE…QEPA and SGSS…GNRR. Residues 251-260 are compositionally biased toward polar residues; it reads NNRQNESQVH. A compositionally biased stretch (low complexity) spans 390-406; it reads TATTRASTATDSLSATA. Positions 427–447 are enriched in basic and acidic residues; the sequence is PSERKRERDERSKDGRGGNRR.

Its function is as follows. Tumor formation by A.tumefaciens involves the transfer and integration of a defined segment (T-DNA) of Ti plasmid DNA into the plant nuclear genome. The virD operon encodes a site-specific endonuclease that cleaves at a unique site within both 24 bp direct repeats flanking the T-DNA. The chain is T-DNA border endonuclease VirD2 (virD2) from Agrobacterium fabrum (strain C58 / ATCC 33970) (Agrobacterium tumefaciens (strain C58)).